Reading from the N-terminus, the 365-residue chain is Phosphopantothenate--cysteine ligase CAB2 (365 aa).

Residues 228-250 form a disordered region; that stretch reads QSGDNGKMGANNDTEGTTRTTPD. The segment covering 238–248 has biased composition (polar residues); sequence NNDTEGTTRTT.

This sequence belongs to the PPC synthetase family. In terms of assembly, homodimer.

It localises to the cytoplasm. The protein localises to the nucleus. The catalysed reaction is (R)-4'-phosphopantothenate + L-cysteine + CTP = N-[(R)-4-phosphopantothenoyl]-L-cysteine + CMP + diphosphate + H(+). Its pathway is cofactor biosynthesis; coenzyme A biosynthesis; CoA from (R)-pantothenate: step 2/5. Its function is as follows. Catalyzes the first step in the biosynthesis of coenzyme A from vitamin B5, where cysteine is conjugated to 4'-phosphopantothenate to form 4-phosphopantothenoylcysteine. The protein is Phosphopantothenate--cysteine ligase CAB2 (CAB2) of Saccharomyces cerevisiae (strain ATCC 204508 / S288c) (Baker's yeast).